We begin with the raw amino-acid sequence, 210 residues long: Thymidylate kinase (210 aa).

Residue 10–17 (GPEGAGKS) participates in ATP binding.

Belongs to the thymidylate kinase family.

The catalysed reaction is dTMP + ATP = dTDP + ADP. Phosphorylation of dTMP to form dTDP in both de novo and salvage pathways of dTTP synthesis. The sequence is that of Thymidylate kinase from Ectopseudomonas mendocina (strain ymp) (Pseudomonas mendocina).